Reading from the N-terminus, the 389-residue chain is uncharacterized protein (389 aa).

Disordered regions lie at residues 119–156 (SSLF…GENQ), 180–233 (PTSK…SSMG), 294–321 (SIPS…TSRT), and 362–389 (PEDM…EIKV). Positions 137–155 (SPSTINIEKNRHSSNSGEN) are enriched in polar residues. The segment covering 190–204 (DDGDEEDDTDDEGEA) has biased composition (acidic residues).

This is an uncharacterized protein from Caenorhabditis elegans.